The chain runs to 610 residues: MDTEDLPANNAPLTVNEQLLGSCTLKFPAQDAQVIVMSGQETIRVLEVEVDTALSSAGAAESGGDEEGSGQSLEATEEAQLDGPVTTSSTTAVTVEVSAPVVQTVVSKAAISVSPAQQTSVPITVQACPQVLTQDGLASLMTGMLAQQSSLGQPLLIPLSMAGSVGGQGGLAVLTLPTATVATLPGLAAASPAGGLLKLPFAGLQAATVLNSVQTQLQAPAQAVLQPQMSALQAMQQTQTTAATTASIVQKASEPSVSVATLQTAGLSINPAIISAASLGAQPQFISSLTTTPIITSAMSNVAGLTSQLITNAQGQVIGTLPLLVNPASLAGAAAASALPAQGLQVQTVAPQLLLNSQGQIIATIGNGPTAAIPSTASVLPKATVPLTLTKTTTQGPVGKVAPSKVIIAPQPSVVKPVTSLTAAGVIACGEMPTVGQLVNKPSAVKDEEAINLEEIREFAKNFKIRRLSLGLTQTQVGQALTATEGPAYSQSAICRFEKLDITPKSAQKLKPVLERWLAEAELWNQKGQQNLMEFVGGEPSKKRKRRTSFTPQAIEVLNTYFEKNSLPTGQEITEIAKELNYDREVVRVWFCNRRQTLKNTSKINVFQSQ.

The interval serine 55–threonine 87 is disordered. A POU-specific domain is found at glutamate 448 to glutamate 522. Residues lysine 543 to serine 602 constitute a DNA-binding region (homeobox).

Belongs to the POU transcription factor family. Class-6 subfamily. As to expression, ubiquitously expressed during embryogenesis.

It localises to the nucleus. Its function is as follows. Transcription factor that binds with high affinity to the motif 5'-TAATGARAT-3'. In Danio rerio (Zebrafish), this protein is POU domain, class 6, transcription factor 1 (pou6f1).